A 229-amino-acid chain; its full sequence is Putative N-acetylmannosamine-6-phosphate 2-epimerase (229 aa).

The protein belongs to the NanE family.

It carries out the reaction an N-acyl-D-glucosamine 6-phosphate = an N-acyl-D-mannosamine 6-phosphate. It participates in amino-sugar metabolism; N-acetylneuraminate degradation; D-fructose 6-phosphate from N-acetylneuraminate: step 3/5. Functionally, converts N-acetylmannosamine-6-phosphate (ManNAc-6-P) to N-acetylglucosamine-6-phosphate (GlcNAc-6-P). The polypeptide is Putative N-acetylmannosamine-6-phosphate 2-epimerase (Escherichia coli O127:H6 (strain E2348/69 / EPEC)).